The sequence spans 316 residues: 2,3-dihydroxyphenylpropionate/2,3-dihydroxicinnamic acid 1,2-dioxygenase (316 aa).

Catalysis depends on H115, which acts as the Proton donor. The active-site Proton acceptor is the H179.

Belongs to the LigB/MhpB extradiol dioxygenase family. As to quaternary structure, homotetramer. Requires Fe(2+) as cofactor.

The catalysed reaction is 3-(2,3-dihydroxyphenyl)propanoate + O2 = (2Z,4E)-2-hydroxy-6-oxonona-2,4-dienedioate + H(+). The enzyme catalyses (2E)-3-(2,3-dihydroxyphenyl)prop-2-enoate + O2 = (2Z,4E,7E)-2-hydroxy-6-oxonona-2,4,7-trienedioate + H(+). It functions in the pathway aromatic compound metabolism; 3-phenylpropanoate degradation. Functionally, catalyzes the non-heme iron(II)-dependent oxidative cleavage of 2,3-dihydroxyphenylpropionic acid and 2,3-dihydroxicinnamic acid into 2-hydroxy-6-ketononadienedioate and 2-hydroxy-6-ketononatrienedioate, respectively. In Paraburkholderia xenovorans (strain LB400), this protein is 2,3-dihydroxyphenylpropionate/2,3-dihydroxicinnamic acid 1,2-dioxygenase.